The chain runs to 196 residues: Probable malonic semialdehyde reductase RutE (196 aa).

This sequence belongs to the nitroreductase family. HadB/RutE subfamily. It depends on FMN as a cofactor.

The catalysed reaction is 3-hydroxypropanoate + NADP(+) = 3-oxopropanoate + NADPH + H(+). Functionally, may reduce toxic product malonic semialdehyde to 3-hydroxypropionic acid, which is excreted. The polypeptide is Probable malonic semialdehyde reductase RutE (Escherichia coli O45:K1 (strain S88 / ExPEC)).